A 562-amino-acid chain; its full sequence is Probable tRNA (uracil-O(2)-)-methyltransferase (562 aa).

The disordered stretch occupies residues 520–546; that stretch reads VSRRQQTNPKKQEATNRPKQPCWMSLN. The segment at 535-562 adopts a C3H1-type zinc-finger fold; that stretch reads NRPKQPCWMSLNHPDGCPLGPESCRYLH.

Belongs to the TRM44 family.

It is found in the cytoplasm. It carries out the reaction uridine(44) in tRNA(Ser) + S-adenosyl-L-methionine = 2'-O-methyluridine(44) in tRNA(Ser) + S-adenosyl-L-homocysteine + H(+). Probable adenosyl-L-methionine (AdoMet)-dependent tRNA (uracil-O(2)-)-methyltransferase. This chain is Probable tRNA (uracil-O(2)-)-methyltransferase, found in Caenorhabditis briggsae.